The chain runs to 138 residues: Large ribosomal subunit protein uL16 (138 aa).

Belongs to the universal ribosomal protein uL16 family. As to quaternary structure, part of the 50S ribosomal subunit.

Functionally, binds 23S rRNA and is also seen to make contacts with the A and possibly P site tRNAs. In Chlamydia pneumoniae (Chlamydophila pneumoniae), this protein is Large ribosomal subunit protein uL16.